The primary structure comprises 216 residues: Adenylate kinase (216 aa).

10 to 15 (GAGKGT) is an ATP binding site. The NMP stretch occupies residues 30–59 (STGDMLRAAVGVGTEVGKRAKAVMDAGKLV). Residues T31, R36, 57–59 (KLV), 85–88 (GFPR), and Q92 contribute to the AMP site. The tract at residues 126–163 (GRYTCAQCGTVYHDTDKVPVEEGVCDKCGSTHFKRRPD) is LID. R127 lines the ATP pocket. 2 residues coordinate Zn(2+): C130 and C133. 136–137 (VY) lines the ATP pocket. Residues C150 and C153 each contribute to the Zn(2+) site. Positions 160 and 172 each coordinate AMP. A200 contacts ATP.

The protein belongs to the adenylate kinase family. As to quaternary structure, monomer.

It is found in the cytoplasm. The enzyme catalyses AMP + ATP = 2 ADP. Its pathway is purine metabolism; AMP biosynthesis via salvage pathway; AMP from ADP: step 1/1. Functionally, catalyzes the reversible transfer of the terminal phosphate group between ATP and AMP. Plays an important role in cellular energy homeostasis and in adenine nucleotide metabolism. This Rhizobium etli (strain CIAT 652) protein is Adenylate kinase.